The sequence spans 466 residues: Asparagine--tRNA ligase (466 aa).

Belongs to the class-II aminoacyl-tRNA synthetase family. In terms of assembly, homodimer.

The protein localises to the cytoplasm. It catalyses the reaction tRNA(Asn) + L-asparagine + ATP = L-asparaginyl-tRNA(Asn) + AMP + diphosphate + H(+). This chain is Asparagine--tRNA ligase, found in Shewanella baltica (strain OS195).